An 81-amino-acid chain; its full sequence is Defensin-like protein 311 (81 aa).

The signal sequence occupies residues 1–24; it reads MEKISAFFVILFLVSSCLVTMSVG. Intrachain disulfides connect C27-C50, C33-C57, and C41-C59.

The protein belongs to the DEFL family.

It is found in the secreted. This chain is Defensin-like protein 311, found in Arabidopsis thaliana (Mouse-ear cress).